The sequence spans 1509 residues: Dynein axonemal assembly factor 1 homolog (1509 aa).

6 LRR repeats span residues 34–56 (RLNDTLYLHYQGFQCIEHLEEYT), 57–78 (ELKCLWLECNAISEIQGLEKLS), 79–100 (KLKCLFLQNNLITKIENLEPCR), 101–122 (ELDTLNLSSNHIRKIQNIGTNI), 125–146 (VLNTLTIASNYLKDSESLSDLV), and 150–171 (TLSVLDLSNNRIDDILIVKIFE). An LRRCT domain is found at 185-223 (PVVSRLPQYRKTLILACKELTYLDSRPVFPRDRACAEAW). Disordered stretches follow at residues 252–280 (CTIRIRNSHRPPDQQDPLLRSSDSEDDTC), 306–327 (HPTSESGASTSSSVEDNDATSS), 962–1008 (SGDL…DSKN), and 1103–1122 (TLQTSFSTVGSDEGKTKLRN). A compositionally biased stretch (low complexity) spans 309–318 (SESGASTSSS). The span at 978–990 (SESEDYDTADDEY) shows a compositional bias: acidic residues. Residues 1103-1112 (TLQTSFSTVG) are compositionally biased toward polar residues.

It belongs to the DNAAF1 family.

It is found in the cell projection. Its subcellular location is the cilium. Cilium-specific protein required for cilia structures. The chain is Dynein axonemal assembly factor 1 homolog (dtr) from Drosophila yakuba (Fruit fly).